Here is a 468-residue protein sequence, read N- to C-terminus: Ubiquitin carboxyl-terminal hydrolase MINDY-1 (468 aa).

The span at 1-19 shows a compositional bias: polar residues; sequence MEQPQTENPAPSKATSAET. Positions 1–105 are disordered; it reads MEQPQTENPA…RPQELPQSPR (105 aa). Basic and acidic residues predominate over residues 22–41; the sequence is SENHEALSGPEKHPQDKDGA. The span at 43–54 shows a compositional bias: low complexity; sequence ADGAAGEQEPGD. Pro residues predominate over residues 68 to 80; it reads CPPPEASSSPPGP. Ser103 carries the phosphoserine modification. The active-site Nucleophile is Cys137. The active-site Proton acceptor is the His319. The tract at residues 388–427 is ubiquitin-binding domain (UBD); sequence QVDQDYLIALSLQQQQQPQGTLGLSDLELAQQLQQEEYQQ. A compositionally biased stretch (low complexity) spans 423 to 432; the sequence is EEYQQQQAVQ. The tract at residues 423-468 is disordered; that stretch reads EEYQQQQAVQPVRTRAPSPQGRGATSGRPAGERRQRSKTESDCVLL. The residue at position 440 (Ser440) is a Phosphoserine. Basic and acidic residues predominate over residues 452–468; the sequence is AGERRQRSKTESDCVLL.

The protein belongs to the MINDY deubiquitinase family. FAM63 subfamily.

It catalyses the reaction Thiol-dependent hydrolysis of ester, thioester, amide, peptide and isopeptide bonds formed by the C-terminal Gly of ubiquitin (a 76-residue protein attached to proteins as an intracellular targeting signal).. Functionally, hydrolase that can specifically remove 'Lys-48'-linked conjugated ubiquitin from proteins. Has exodeubiquitinase activity and has a preference for long polyubiquitin chains. May play a regulatory role at the level of protein turnover. This chain is Ubiquitin carboxyl-terminal hydrolase MINDY-1 (Mindy1), found in Mus musculus (Mouse).